A 256-amino-acid polypeptide reads, in one-letter code: MRPAALRGALLGCLCLALLCLGGADKRLRDNHEWKKLIMVQHWPETVCEKIQNDCRDPPDYWTIHGLWPDKSEGCNRSWPFNLEEIKDLLPEMRAYWPDVIHSFPNRSRFWKHEWEKHGTCAAQVDALNSQKKYFGRSLELYRELDLNSVLLKLGIKPSINYYQVADFKDALARVYGVIPKIQCLPPSQDEEVQTIGQIELCLTKQDQQLQNCTEPGEQPSPKQEVWLANGAAESRGLRVCEDGPVFYPPPKKTKH.

Positions M1–A24 are cleaved as a signal peptide. A disulfide bridge links C48 with C55. H65 is a catalytic residue. Intrachain disulfides connect C75/C121, C184/C241, and C202/C213. N76 and N106 each carry an N-linked (GlcNAc...) asparagine glycan. Catalysis depends on residues E114 and H118. A glycan (N-linked (GlcNAc...) asparagine) is linked at N212.

Belongs to the RNase T2 family. In terms of tissue distribution, ubiquitous. Higher expression levels observed in the temporal lobe and fetal brain.

It is found in the secreted. The protein localises to the lysosome lumen. It localises to the endoplasmic reticulum lumen. The protein resides in the mitochondrion intermembrane space. It catalyses the reaction a ribonucleotidyl-ribonucleotide-RNA + H2O = a 3'-end 3'-phospho-ribonucleotide-RNA + a 5'-end dephospho-ribonucleoside-RNA + H(+). It carries out the reaction an adenylyl-uridine-RNA = a 3'-end 2',3'-cyclophospho-AMP-RNA + a 5'-end dephospho-uridine-RNA. The enzyme catalyses a guanylyl-uridine-RNA = a 3'-end 2',3'-cyclophospho-GMP-RNA + a 5'-end dephospho-uridine-RNA. With respect to regulation, inhibited by Zn(2+) and Cu(2+). Ribonuclease that plays an essential role in innate immune response by recognizing and degrading RNAs from microbial pathogens that are subsequently sensed by TLR8. Cleaves preferentially single-stranded RNA molecules between purine and uridine residues, which critically contributes to the supply of catabolic uridine and the generation of purine-2',3'-cyclophosphate-terminated oligoribonucleotides. In turn, RNase T2 degradation products promote the RNA-dependent activation of TLR8. In plasmacytoid dendritic cells, it cooperates with PLD3 or PLD4 5'-&gt;3' exonucleases to process RNA fragments and release 2',3'-cyclic guanosine monophosphate (2',3'-cGMP), a potent stimulatory ligand for TLR7. Also plays a key role in degradation of mitochondrial RNA and processing of non-coding RNA imported from the cytosol into mitochondria. Participates as well in degradation of mitochondrion-associated cytosolic rRNAs. The chain is Ribonuclease T2 (RNASET2) from Homo sapiens (Human).